The chain runs to 96 residues: Large ribosomal subunit protein bL27 (96 aa).

The propeptide occupies 1-9 (MLNMNLQLL).

This sequence belongs to the bacterial ribosomal protein bL27 family. Post-translationally, the N-terminus is cleaved by ribosomal processing cysteine protease Prp.

This is Large ribosomal subunit protein bL27 from Clostridioides difficile (strain 630) (Peptoclostridium difficile).